The primary structure comprises 270 residues: 4-hydroxy-tetrahydrodipicolinate reductase (270 aa).

Residues 11 to 16 (GASGRM) and glutamate 37 contribute to the NAD(+) site. Residue arginine 38 coordinates NADP(+). Residues 101-103 (GTT) and 125-128 (APNM) each bind NAD(+). Histidine 158 serves as the catalytic Proton donor/acceptor. Histidine 159 is a binding site for (S)-2,3,4,5-tetrahydrodipicolinate. Lysine 162 serves as the catalytic Proton donor. (S)-2,3,4,5-tetrahydrodipicolinate is bound at residue 168–169 (GT).

This sequence belongs to the DapB family.

The protein resides in the cytoplasm. The enzyme catalyses (S)-2,3,4,5-tetrahydrodipicolinate + NAD(+) + H2O = (2S,4S)-4-hydroxy-2,3,4,5-tetrahydrodipicolinate + NADH + H(+). It carries out the reaction (S)-2,3,4,5-tetrahydrodipicolinate + NADP(+) + H2O = (2S,4S)-4-hydroxy-2,3,4,5-tetrahydrodipicolinate + NADPH + H(+). The protein operates within amino-acid biosynthesis; L-lysine biosynthesis via DAP pathway; (S)-tetrahydrodipicolinate from L-aspartate: step 4/4. Catalyzes the conversion of 4-hydroxy-tetrahydrodipicolinate (HTPA) to tetrahydrodipicolinate. The protein is 4-hydroxy-tetrahydrodipicolinate reductase of Shewanella amazonensis (strain ATCC BAA-1098 / SB2B).